Consider the following 449-residue polypeptide: MATDAKRLKTEGSDPLQSFLQWCEGVGLKLNNKVYISKEGTVAEYGMLAKEDIDEGELLFTIPRMALLHQGTTKVLAVLEEGKASLENTSGWVPLLLALMYEYTSPQSHWRPYLSLWSDFTALDHPMFWSKDERDRLLKGTGIPEAVDTDLTNIQKEYKDIVLPFITLHPDLWDPERHTLDLYRSLVAFVMAYSFQEPLDEEDEDEKDPNPPMMVPIADMLNHVSNHNANLEYTPECLKMVSVRSIRKGEEVFNTYGQMANWQLLHMYGLXEPYQSNSNDTADIPMSNVYKAAVQVTRSEAEQRLLVEKWSLLCEMEMVGDKGVFIFGKSGSLTDTEMYTTLKILCMSVEEFEDFRENEGWEEADDDEEKMLQALSNEGLPSLPPVWRCLVHAAARFTLDSYGEDMLKDKVLLEDKDGYAKLSSRQRRALQVRYGQKTILHQLLELTKP.

An SET domain is found at 32–257; sequence NKVYISKEGT…KGEEVFNTYG (226 aa).

This sequence belongs to the class V-like SAM-binding methyltransferase superfamily. Histone-lysine methyltransferase family. SETD6 subfamily.

Its subcellular location is the nucleus. Protein-lysine N-methyltransferase. This Salmo salar (Atlantic salmon) protein is N-lysine methyltransferase setd6 (setd6).